A 353-amino-acid chain; its full sequence is tRNA N6-adenosine threonylcarbamoyltransferase (353 aa).

2 residues coordinate Fe cation: histidine 109 and histidine 113. Substrate is bound by residues 136 to 140, aspartate 169, glycine 182, aspartate 186, and asparagine 284; that span reads TVSGG. Aspartate 312 lines the Fe cation pocket.

This sequence belongs to the KAE1 / TsaD family. Fe(2+) is required as a cofactor.

Its subcellular location is the cytoplasm. The catalysed reaction is L-threonylcarbamoyladenylate + adenosine(37) in tRNA = N(6)-L-threonylcarbamoyladenosine(37) in tRNA + AMP + H(+). Required for the formation of a threonylcarbamoyl group on adenosine at position 37 (t(6)A37) in tRNAs that read codons beginning with adenine. Is involved in the transfer of the threonylcarbamoyl moiety of threonylcarbamoyl-AMP (TC-AMP) to the N6 group of A37, together with TsaE and TsaB. TsaD likely plays a direct catalytic role in this reaction. This Chlorobium phaeobacteroides (strain DSM 266 / SMG 266 / 2430) protein is tRNA N6-adenosine threonylcarbamoyltransferase.